The sequence spans 274 residues: Chemotaxis protein methyltransferase 1 (274 aa).

The CheR-type methyltransferase domain maps to 1–274 (MSAANADFEL…CSPGIIYRAK (274 aa)). Residues Asn72, Thr74, Arg78, Glu115, Asp144, 200-201 (NL), and 217-218 (RN) contribute to the S-adenosyl-L-methionine site.

It carries out the reaction L-glutamyl-[protein] + S-adenosyl-L-methionine = [protein]-L-glutamate 5-O-methyl ester + S-adenosyl-L-homocysteine. In terms of biological role, methylation of the membrane-bound methyl-accepting chemotaxis proteins (MCP) to form gamma-glutamyl methyl ester residues in MCP. This chain is Chemotaxis protein methyltransferase 1 (cheR1), found in Pseudomonas aeruginosa (strain ATCC 15692 / DSM 22644 / CIP 104116 / JCM 14847 / LMG 12228 / 1C / PRS 101 / PAO1).